Here is a 921-residue protein sequence, read N- to C-terminus: Protein translocase subunit SecA (921 aa).

ATP contacts are provided by residues Gln87, 105–109, and Asp515; that span reads GEGKT. A disordered region spans residues 872–901; the sequence is DMEVAGSTGDRGAALDIQPAPVRSGPKIGR. Cys905, Cys907, Cys916, and Cys917 together coordinate Zn(2+).

It belongs to the SecA family. As to quaternary structure, monomer and homodimer. Part of the essential Sec protein translocation apparatus which comprises SecA, SecYEG and auxiliary proteins SecDF-YajC and YidC. The cofactor is Zn(2+).

It localises to the cell inner membrane. The protein resides in the cytoplasm. The enzyme catalyses ATP + H2O + cellular proteinSide 1 = ADP + phosphate + cellular proteinSide 2.. In terms of biological role, part of the Sec protein translocase complex. Interacts with the SecYEG preprotein conducting channel. Has a central role in coupling the hydrolysis of ATP to the transfer of proteins into and across the cell membrane, serving both as a receptor for the preprotein-SecB complex and as an ATP-driven molecular motor driving the stepwise translocation of polypeptide chains across the membrane. This chain is Protein translocase subunit SecA, found in Polynucleobacter asymbioticus (strain DSM 18221 / CIP 109841 / QLW-P1DMWA-1) (Polynucleobacter necessarius subsp. asymbioticus).